Here is a 359-residue protein sequence, read N- to C-terminus: RuBisCO accumulation factor 1 (359 aa).

The interval 12–195 (LSPEETDALF…RQKIEQLLSD (184 aa)) is N-terminal alpha-helix. The tract at residues 219 to 345 (PLLIPVAGSL…VLLVMRPKKI (127 aa)) is C-terminal beta-sheet.

This sequence belongs to the RAF family. Homodimer. Forms an RbcL(8)-Raf1(8) complex. Forms complexes of many stoichiometries with RbcL with and without RbcS. RbcX and Raf1 can bind simultaneously to RbcL.

It localises to the cytoplasm. In terms of biological role, a major RuBisCO chaperone. Acts after GroEL-GroES chaperonin to fold and/or assemble the large subunit of RuBisCO (ccbL, rbcL). Cooperates with RbcX in RbcL folding, plays the major role in assembly of dimers into RbcL(8)-Raf1(8) intermediate complexes. RbcS replaces Raf1, leading to holoenzyme formation. Its function is as follows. Raf1 and RbcX are probably functionally redundant; it has been suggested they may cooperate. The sequence is that of RuBisCO accumulation factor 1 from Picosynechococcus sp. (strain ATCC 27264 / PCC 7002 / PR-6) (Agmenellum quadruplicatum).